Here is a 205-residue protein sequence, read N- to C-terminus: MKIANTFIKRGAAGGLDLSQAPGVTLTLAERRRSRQRLDLDEGRGELGMAIERGQTLRDGDVLVAEDGTYVVVRAALEDVARVTAATPWQLARAAYHLGNRHVLLEIAEQHLQFEYDAVLIDMLAQLGGVTAMRLRAVFEPDVGAYGGGHRHGHDESFGDDYALAQAAYHAHEAHPHAHSHAGGHGHVHSGHGHGGKHGEHDAES.

Residues 171-205 (AHEAHPHAHSHAGGHGHVHSGHGHGGKHGEHDAES) form a disordered region. A compositionally biased stretch (basic residues) spans 177–196 (HAHSHAGGHGHVHSGHGHGG).

It belongs to the UreE family.

It localises to the cytoplasm. Functionally, involved in urease metallocenter assembly. Binds nickel. Probably functions as a nickel donor during metallocenter assembly. The sequence is that of Urease accessory protein UreE from Bordetella parapertussis (strain 12822 / ATCC BAA-587 / NCTC 13253).